The sequence spans 181 residues: HGPRTase-like protein 2 (181 aa).

It belongs to the purine/pyrimidine phosphoribosyltransferase family. Archaeal HPRT subfamily.

In terms of biological role, may catalyze a purine salvage reaction, the substrate is unknown. The protein is HGPRTase-like protein 2 of Haloquadratum walsbyi (strain DSM 16854 / JCM 12705 / C23).